The chain runs to 183 residues: Acidic proline-rich protein HP43A (183 aa).

The N-terminal stretch at 1–14 (MLVVLLTAALLAEH) is a signal peptide. The tract at residues 22-183 (ISQLSEEEQQ…QGSEEQSTSL (162 aa)) is disordered. Residues 52–65 (SDEEGDDDGEEDGN) show a composition bias toward acidic residues. 5 consecutive repeat copies span residues 81–100 (RPPK…QQQN), 101–120 (RPPK…QQQN), 121–140 (RPPK…QQQN), 141–160 (RPPK…QQQN), and 161–180 (RPPK…EEQS). Positions 86 to 183 (GNQQGPPQQE…QGSEEQSTSL (98 aa)) are enriched in low complexity.

It is found in the secreted. The sequence is that of Acidic proline-rich protein HP43A (H29) from Mesocricetus auratus (Golden hamster).